A 52-amino-acid chain; its full sequence is uncharacterized protein (52 aa).

The tract at residues 1–52 (MFGFIYRDPSPAPQGKIRDGSKDPKTPGGGGGGGGGISPNGGAPLGGKGFSM) is disordered. Residues 16-25 (KIRDGSKDPK) show a composition bias toward basic and acidic residues. The span at 27–52 (PGGGGGGGGGISPNGGAPLGGKGFSM) shows a compositional bias: gly residues.

This is an uncharacterized protein from Dictyostelium discoideum (Social amoeba).